The primary structure comprises 382 residues: 2-carboxy-1,4-naphthoquinone phytyltransferase, chloroplastic (382 aa).

A chloroplast-targeting transit peptide spans 1-66; the sequence is MVNFVSLCDI…RRNLRVRPIF (66 aa). Transmembrane regions (helical) follow at residues 99-119, 123-143, 168-188, 196-216, 224-244, 257-277, 323-343, and 361-381; these read VALV…GLFL, YVTL…SNDV, TLAA…WTSL, ILLL…PFRL, PLCF…LLGS, VLSS…CSHF, ILPL…NLVS, and YYCV…LVIA.

Belongs to the MenA family. Type 2 subfamily.

It localises to the plastid. Its subcellular location is the chloroplast membrane. It catalyses the reaction 2-carboxy-1,4-naphthoquinone + phytyl diphosphate + H(+) = demethylphylloquinone + CO2 + diphosphate. Its function is as follows. Involved in the synthesis of phylloquinone (vitamin K1). Catalyzes the transfer of a prenyl chain to 2-carboxy-1,4-naphthoquinone. This is 2-carboxy-1,4-naphthoquinone phytyltransferase, chloroplastic (ABC4) from Arabidopsis thaliana (Mouse-ear cress).